The primary structure comprises 460 residues: tRNA-2-methylthio-N(6)-dimethylallyladenosine synthase (460 aa).

The region spanning 23–138 (RKVYVHTFGC…LPEMVARAER (116 aa)) is the MTTase N-terminal domain. Residues C32, C68, C101, C176, C180, and C183 each contribute to the [4Fe-4S] cluster site. The Radical SAM core domain occupies 162 to 394 (ARGRPTAFVT…QAAQRRIAAA (233 aa)). A TRAM domain is found at 397–460 (AAELGKVVEV…GGSSLSGTPA (64 aa)).

The protein belongs to the methylthiotransferase family. MiaB subfamily. As to quaternary structure, monomer. It depends on [4Fe-4S] cluster as a cofactor.

The protein localises to the cytoplasm. It catalyses the reaction N(6)-dimethylallyladenosine(37) in tRNA + (sulfur carrier)-SH + AH2 + 2 S-adenosyl-L-methionine = 2-methylsulfanyl-N(6)-dimethylallyladenosine(37) in tRNA + (sulfur carrier)-H + 5'-deoxyadenosine + L-methionine + A + S-adenosyl-L-homocysteine + 2 H(+). Functionally, catalyzes the methylthiolation of N6-(dimethylallyl)adenosine (i(6)A), leading to the formation of 2-methylthio-N6-(dimethylallyl)adenosine (ms(2)i(6)A) at position 37 in tRNAs that read codons beginning with uridine. This is tRNA-2-methylthio-N(6)-dimethylallyladenosine synthase from Anaeromyxobacter sp. (strain Fw109-5).